Here is a 616-residue protein sequence, read N- to C-terminus: Xaa-Pro aminopeptidase app-1 (616 aa).

Residues arginine 78 and histidine 392 each coordinate a peptide. Zn(2+)-binding residues include aspartate 413, aspartate 424, and histidine 487. A peptide-binding residues include histidine 487, histidine 496, and glutamate 522. The Zn(2+) site is built by glutamate 522 and glutamate 536.

It belongs to the peptidase M24B family. As to quaternary structure, homodimer. May interact with pid-2, pid-4 and pid-5. It depends on Zn(2+) as a cofactor. Specifically expressed in the intestine.

The protein resides in the cytoplasm. The enzyme catalyses Release of any N-terminal amino acid, including proline, that is linked to proline, even from a dipeptide or tripeptide.. With respect to regulation, strongly inhibited by the metal ion chelators EDTA and 1,10-phenanthroline. Also inhibited by apstatin. Activity towards bradykinin is inhibited by Mn(2+) and Zn(2+) at all concentrations tested, whereas Co(2+) is inhibitory at concentrations above 100 uM and activatory at 10 uM. In terms of biological role, catalyzes the removal of a penultimate prolyl residue from the N-termini of peptides, such as Arg-Pro-Pro. Has activity towards the flp-9 neuropeptide KPSFVRF-amide. The chain is Xaa-Pro aminopeptidase app-1 from Caenorhabditis elegans.